Reading from the N-terminus, the 132-residue chain is Large ribosomal subunit protein uL14 (132 aa).

It belongs to the universal ribosomal protein uL14 family. As to quaternary structure, part of the 50S ribosomal subunit. Forms a cluster with proteins L3 and L24e, part of which may contact the 16S rRNA in 2 intersubunit bridges.

Functionally, binds to 23S rRNA. Forms part of two intersubunit bridges in the 70S ribosome. The polypeptide is Large ribosomal subunit protein uL14 (Methanococcus vannielii).